A 206-amino-acid polypeptide reads, in one-letter code: Large ribosomal subunit protein bL25 (206 aa).

Belongs to the bacterial ribosomal protein bL25 family. CTC subfamily. In terms of assembly, part of the 50S ribosomal subunit; part of the 5S rRNA/L5/L18/L25 subcomplex. Contacts the 5S rRNA. Binds to the 5S rRNA independently of L5 and L18.

Functionally, this is one of the proteins that binds to the 5S RNA in the ribosome where it forms part of the central protuberance. In Ralstonia nicotianae (strain ATCC BAA-1114 / GMI1000) (Ralstonia solanacearum), this protein is Large ribosomal subunit protein bL25.